We begin with the raw amino-acid sequence, 640 residues long: Acid beta-fructofuranosidase 2, vacuolar (640 aa).

The interval 1-22 (MDTNTTSYTPLPGDPFLSGPPE) is disordered. The Cytoplasmic portion of the chain corresponds to 1–29 (MDTNTTSYTPLPGDPFLSGPPETPRRPLK). A propeptide spans 1–78 (MDTNTTSYTP…HPQSTTNTML (78 aa)) (removed in mature form). The chain crosses the membrane as a helical span at residues 30 to 49 (GFAVIFASVIFLMSLVALII). Over 50 to 616 (HQGPQQPPDV…FSPDAASHSS (567 aa)) the chain is Lumenal. Substrate-binding positions include 93–96 (WMND), Gln112, Trp120, 155–156 (WT), 219–220 (RD), Glu274, and Asp307. The active site involves Asp96. A disulfide bond links Cys464 and Cys512. A helical membrane pass occupies residues 617–639 (FTPVTVFIKFIVPFGIFLTLYFV). Position 640 (Arg640) is a topological domain, cytoplasmic.

It belongs to the glycosyl hydrolase 32 family. In terms of tissue distribution, expressed in buds, stems, roots and leaves.

The protein localises to the membrane. It localises to the vacuole membrane. It carries out the reaction Hydrolysis of terminal non-reducing beta-D-fructofuranoside residues in beta-D-fructofuranosides.. Vacuolar invertase. The chain is Acid beta-fructofuranosidase 2, vacuolar from Rosa hybrid cultivar.